A 192-amino-acid polypeptide reads, in one-letter code: Glycerol-3-phosphate acyltransferase (192 aa).

The next 5 membrane-spanning stretches (helical) occupy residues 1-21 (MFIA…AYIL), 49-69 (GLAG…IYSL), 80-100 (ELCI…WLKF), 110-130 (IGVI…SWLF), and 143-163 (IVSI…VVAL).

It belongs to the PlsY family. Probably interacts with PlsX.

Its subcellular location is the cell inner membrane. The enzyme catalyses an acyl phosphate + sn-glycerol 3-phosphate = a 1-acyl-sn-glycero-3-phosphate + phosphate. Its pathway is lipid metabolism; phospholipid metabolism. Catalyzes the transfer of an acyl group from acyl-phosphate (acyl-PO(4)) to glycerol-3-phosphate (G3P) to form lysophosphatidic acid (LPA). This enzyme utilizes acyl-phosphate as fatty acyl donor, but not acyl-CoA or acyl-ACP. This chain is Glycerol-3-phosphate acyltransferase, found in Anaplasma phagocytophilum (strain HZ).